The chain runs to 345 residues: MSSIRLTQYSHGAGCGCKISPKVLDTILKSQIPGFDDPTLVVGNSSKDDAAVVDIGNGQGIVSTTDFFMPIVDDPFTFGRIAATNAISDIYAMGGKPIVAIAILGWPINTLAPEVAQQVIDGGRQVCHEAGISLAGGHSIDAPEPIFGLAVTGIVPLDAIKQNDTAKVGDTLYLTKPLGIGILTTAQKKGKLKPEHEQLAPNAMCTLNKIGQRFAELPGVHAMTDVTGFGLAGHLLEMCEGSGVSARLDFKALPLLDEVDYYLSEGCVPGGTLRNFDSYGDKLDAMDDRTRNILCDPQTSGGLLVAVGKESEAELLAIAAQAGLTLSPIGQLQARTGNQFIEVVQ.

The active site involves Cys15. ATP is bound by residues Lys18 and 46-48 (SKD). Asp49 contributes to the Mg(2+) binding site. ATP contacts are provided by residues Asp66, Asp89, and 137–139 (GHS). Asp89 is a binding site for Mg(2+). Asp225 is a binding site for Mg(2+).

Belongs to the selenophosphate synthase 1 family. Class I subfamily. As to quaternary structure, homodimer. Mg(2+) is required as a cofactor.

It carries out the reaction hydrogenselenide + ATP + H2O = selenophosphate + AMP + phosphate + 2 H(+). Its function is as follows. Synthesizes selenophosphate from selenide and ATP. This Aeromonas hydrophila subsp. hydrophila (strain ATCC 7966 / DSM 30187 / BCRC 13018 / CCUG 14551 / JCM 1027 / KCTC 2358 / NCIMB 9240 / NCTC 8049) protein is Selenide, water dikinase.